Consider the following 216-residue polypeptide: Large ribosomal subunit protein uL24m (216 aa).

A mitochondrion-targeting transit peptide spans 1-9 (MRLTALLSM). In terms of domain architecture, KOW spans 56 to 89 (VVRGDTVEVLSGKEKGKQGKVAQVIRARNWVILE). The disordered stretch occupies residues 167–186 (PQQWKDGPKDTSPEDTLQKT).

This sequence belongs to the universal ribosomal protein uL24 family. Component of the mitochondrial ribosome large subunit (39S) which comprises a 16S rRNA and about 50 distinct proteins.

The protein localises to the mitochondrion. This is Large ribosomal subunit protein uL24m (mrpl24) from Danio rerio (Zebrafish).